Consider the following 406-residue polypeptide: Tyrosine--tRNA ligase (406 aa).

Tyr35 provides a ligand contact to L-tyrosine. The 'HIGH' region signature appears at 40–49; it reads PTADSLHIGH. Residues Tyr168 and Gln172 each contribute to the L-tyrosine site. A 'KMSKS' region motif is present at residues 228 to 232; the sequence is KMGKT. Residue Lys231 participates in ATP binding. The S4 RNA-binding domain occupies 340-406; that stretch reads CSVVELLVDI…KKNYNRIIIK (67 aa).

Belongs to the class-I aminoacyl-tRNA synthetase family. TyrS type 1 subfamily. As to quaternary structure, homodimer.

Its subcellular location is the cytoplasm. It carries out the reaction tRNA(Tyr) + L-tyrosine + ATP = L-tyrosyl-tRNA(Tyr) + AMP + diphosphate + H(+). In terms of biological role, catalyzes the attachment of tyrosine to tRNA(Tyr) in a two-step reaction: tyrosine is first activated by ATP to form Tyr-AMP and then transferred to the acceptor end of tRNA(Tyr). The chain is Tyrosine--tRNA ligase from Clostridium kluyveri (strain NBRC 12016).